The following is a 279-amino-acid chain: Probable endonuclease 4 (279 aa).

Residues histidine 69, histidine 109, glutamate 145, aspartate 179, histidine 182, histidine 216, aspartate 229, histidine 231, and glutamate 261 each coordinate Zn(2+).

The protein belongs to the AP endonuclease 2 family. The cofactor is Zn(2+).

The enzyme catalyses Endonucleolytic cleavage to 5'-phosphooligonucleotide end-products.. Endonuclease IV plays a role in DNA repair. It cleaves phosphodiester bonds at apurinic or apyrimidinic (AP) sites, generating a 3'-hydroxyl group and a 5'-terminal sugar phosphate. This chain is Probable endonuclease 4, found in Tolumonas auensis (strain DSM 9187 / NBRC 110442 / TA 4).